The sequence spans 137 residues: uncharacterized protein (137 aa).

This is an uncharacterized protein from Escherichia coli (strain K12).